A 773-amino-acid polypeptide reads, in one-letter code: Membrane-bound aldehyde dehydrogenase [pyrroloquinoline-quinone] (773 aa).

The tat-type signal signal peptide spans 1–44 (MGRLNRFRLGKDGRREQASLSRRGFLVTSLGAGVMFGFARPSSA).

Pyrroloquinoline quinone is required as a cofactor. Predicted to be exported by the Tat system. The position of the signal peptide cleavage has been experimentally proven.

It localises to the cell inner membrane. It carries out the reaction an aldehyde + a quinone + H2O = a quinol + a carboxylate + H(+). In Gluconacetobacter polyoxogenes (Acetobacter polyoxogenes), this protein is Membrane-bound aldehyde dehydrogenase [pyrroloquinoline-quinone].